A 473-amino-acid chain; its full sequence is Dol-P-Glc:Glc(2)Man(9)GlcNAc(2)-PP-Dol alpha-1,2-glucosyltransferase (473 aa).

Residues 1-6 (MAQLEG) lie on the Cytoplasmic side of the membrane. A helical transmembrane segment spans residues 7–27 (YCFSAALSCTFLVSCLLFSAF). At 28–64 (SRALREPYMDEIFHLPQAQRYCEGHFSLSQWDPMITT) the chain is on the extracellular side. The helical transmembrane segment at 65–85 (LPGLYLVSVGVVKPAIWIFAW) threads the bilayer. Residues 86–97 (SEHVVCSIGMLR) are Cytoplasmic-facing. A helical membrane pass occupies residues 98 to 118 (FVNLLFSVGNFYLLYLLFHKV). Residues 119–126 (QPRNKAAS) are Extracellular-facing. The helical transmembrane segment at 127-147 (SIQRVLSTLTLAVFPTLYFFN) threads the bilayer. Topologically, residues 148–150 (FLY) are cytoplasmic. Residues 151–171 (YTEAGSMFFTLFAYLMCLYGN) form a helical membrane-spanning segment. The Extracellular segment spans residues 172–175 (HKTS). Residues 176–196 (AFLGFCGFMFRQTNIIWAVFC) form a helical membrane-spanning segment. Topologically, residues 197-256 (AGNVIAQKLTEAWKTELQKKEDRLPPIKGPFAEFRKILQFLLAYSMSFKNLSMLFCLTWP) are cytoplasmic. A helical transmembrane segment spans residues 257–277 (YILLGFLFCAFVVVNGGIVIG). The Extracellular segment spans residues 278-283 (DRSSHE). A helical transmembrane segment spans residues 284–304 (ACLHFPQLFYFFSFTLFFSFP). Residues 305-317 (HLLSPSKIKTFLS) are Cytoplasmic-facing. Residues 318-338 (LVWKHGILFLVVTLVSVFLVW) traverse the membrane as a helical segment. At 339 to 365 (KFTYAHKYLLADNRHYTFYVWKRVFQR) the chain is on the extracellular side. A helical transmembrane segment spans residues 366-386 (YAILKYLLVPAYIFAGWSIAD). Topologically, residues 387-392 (SLKSKP) are cytoplasmic. The chain crosses the membrane as a helical span at residues 393-413 (IFWNLMFFICLFIVIVPQKLL). The Extracellular portion of the chain corresponds to 414–436 (EFRYFILPYVIYRLNITLPPTSR). The chain crosses the membrane as a helical span at residues 437–457 (LVCELSCYAIVNFITFYIFLN). At 458–473 (KTFQWPNSQDIQRFMW) the chain is on the cytoplasmic side.

This sequence belongs to the ALG10 glucosyltransferase family. As to quaternary structure, interacts with KCNH1; may regulate KCNH1, possibly by regulating its N-glycosylation. Interacts with KCNH2; may reduce KCNH2 sensitivity to classic proarrhythmic drug blockade, possibly by regulating its N-glycosylation. In terms of tissue distribution, highly expressed in heart, placenta, liver, kidney and pancreas. Weakly expressed in lung, skeletal muscle and brain.

Its subcellular location is the endoplasmic reticulum membrane. It catalyses the reaction an alpha-D-Glc-(1-&gt;3)-alpha-D-Glc-(1-&gt;3)-alpha-D-Man-(1-&gt;2)-alpha-D-Man-(1-&gt;2)-alpha-D-Man-(1-&gt;3)-[alpha-D-Man-(1-&gt;2)-alpha-D-Man-(1-&gt;3)-[alpha-D-Man-(1-&gt;2)-alpha-D-Man-(1-&gt;6)]-alpha-D-Man-(1-&gt;6)]-beta-D-Man-(1-&gt;4)-beta-D-GlcNAc-(1-&gt;4)-alpha-D-GlcNAc-diphospho-di-trans,poly-cis-dolichol + a di-trans,poly-cis-dolichyl beta-D-glucosyl phosphate = a alpha-D-Glc-(1-&gt;2)-alpha-D-Glc-(1-&gt;3)-alpha-D-Glc-(1-&gt;3)-alpha-D-Man-(1-&gt;2)-alpha-D-Man-(1-&gt;2)-alpha-D-Man-(1-&gt;3)-[alpha-D-Man-(1-&gt;2)-alpha-D-Man-(1-&gt;3)-[alpha-D-Man-(1-&gt;2)-alpha-D-Man-(1-&gt;6)]-alpha-D-Man-(1-&gt;6)]-beta-D-Man-(1-&gt;4)-beta-D-GlcNAc-(1-&gt;4)-alpha-D-GlcNAc-diphospho-di-trans,poly-cis-dolichol + a di-trans,poly-cis-dolichyl phosphate + H(+). It functions in the pathway protein modification; protein glycosylation. Dol-P-Glc:Glc(2)Man(9)GlcNAc(2)-PP-Dol alpha-1,2-glucosyltransferase that operates in the biosynthetic pathway of dolichol-linked oligosaccharides, the glycan precursors employed in protein asparagine (N)-glycosylation. The assembly of dolichol-linked oligosaccharides begins on the cytosolic side of the endoplasmic reticulum membrane and finishes in its lumen. The sequential addition of sugars to dolichol pyrophosphate produces dolichol-linked oligosaccharides containing fourteen sugars, including two GlcNAcs, nine mannoses and three glucoses. Once assembled, the oligosaccharide is transferred from the lipid to nascent proteins by oligosaccharyltransferases. In the lumen of the endoplasmic reticulum, adds the third and last glucose residue from dolichyl phosphate glucose (Dol-P-Glc) onto the lipid-linked oligosaccharide intermediate Glc(2)Man(9)GlcNAc(2)-PP-Dol to produce Glc(3)Man(9)GlcNAc(2)-PP-Dol. This Homo sapiens (Human) protein is Dol-P-Glc:Glc(2)Man(9)GlcNAc(2)-PP-Dol alpha-1,2-glucosyltransferase.